The chain runs to 238 residues: CS1 fimbrial subunit B (238 aa).

The signal sequence occupies residues 1–17 (MRKLFLSLLMIPFVAKA).

The protein localises to the fimbrium. Functionally, might function as a shuttle protein in the transport of fimbria through the periplasmic space or might function as an adhesin. In Escherichia coli, this protein is CS1 fimbrial subunit B (csoB).